A 239-amino-acid chain; its full sequence is Transcriptional regulatory protein DcuR (239 aa).

The 119-residue stretch at 3–121 (NVLIIDDDAM…RFEEALTGWR (119 aa)) folds into the Response regulatory domain. A 4-aspartylphosphate modification is found at aspartate 56. Positions 181–200 (TDELANEVNISRVSCRKYLI) form a DNA-binding region, H-T-H motif.

Post-translationally, phosphorylated and activated by DcuS.

The protein localises to the cytoplasm. Functionally, member of the two-component regulatory system DcuR/DcuS. Involved in the C4-dicarboxylate-stimulated regulation of the genes encoding the anaerobic fumarate respiratory system (frdABCD; nuoAN; dcuB; dcuC; sdhCDAB; etc.). Weakly regulates the aerobic C4-dicarboxylate transporter dctA. The polypeptide is Transcriptional regulatory protein DcuR (dcuR) (Escherichia coli O157:H7).